The primary structure comprises 405 residues: Transcriptional regulatory protein DEP1 (405 aa).

The segment covering 1 to 12 has biased composition (low complexity); sequence MSQQTPQESEQT. 2 disordered regions span residues 1 to 26 and 49 to 171; these read MSQQ…SVLS and AGTE…VMPS. The residue at position 56 (Ser-56) is a Phosphoserine. 2 stretches are compositionally biased toward basic and acidic residues: residues 86–108 and 116–139; these read SLKR…KVPG and EEEK…ARDE. Ser-120 carries the phosphoserine modification. The segment covering 140–157 has biased composition (acidic residues); the sequence is QGDEGDNEEENNEEDNEN. Ser-370 carries the post-translational modification Phosphoserine.

As to quaternary structure, component of the RPD3C(L) complex composed of at least ASH1, CTI6, DEP1, PHO23, RPD3, RXT2, RXT3, SAP30, SDS3, SIN3, UME1 and UME6.

Its subcellular location is the cytoplasm. It is found in the nucleus. Its function is as follows. Component of the RPD3C(L) histone deacetylase complex (HDAC) responsible for the deacetylation of lysine residues on the N-terminal part of the core histones (H2A, H2B, H3 and H4). Histone deacetylation gives a tag for epigenetic repression and plays an important role in transcriptional regulation, cell cycle progression and developmental events. The sequence is that of Transcriptional regulatory protein DEP1 (DEP1) from Saccharomyces cerevisiae (strain ATCC 204508 / S288c) (Baker's yeast).